A 104-amino-acid polypeptide reads, in one-letter code: L-rhamnose mutarotase (104 aa).

Tyr-18 is a binding site for substrate. The Proton donor role is filled by His-22. Substrate-binding positions include Tyr-41 and 76-77; that span reads WW.

Belongs to the rhamnose mutarotase family. In terms of assembly, homodimer.

Its subcellular location is the cytoplasm. The enzyme catalyses alpha-L-rhamnose = beta-L-rhamnose. It functions in the pathway carbohydrate metabolism; L-rhamnose metabolism. Functionally, involved in the anomeric conversion of L-rhamnose. The sequence is that of L-rhamnose mutarotase from Sinorhizobium medicae (strain WSM419) (Ensifer medicae).